A 490-amino-acid polypeptide reads, in one-letter code: MRINPTTYGSEISLIEKKNRGRIVQIIGPVLDVAFPPGKMPNIYNALVVKGRDTEQMNVTCEVQQLLGNNRVRAVAMNDTDGLMRGMEVIDMGTPITVPVGGSTLGRIFNVLGEPVDNFGPVDTNTTSTIHRSAPAFIQLDTKLSIFETGIKVVDLLAPYRRGGKIGLFGGAGVGKTVLIMELINNIAKAHGGVSVFGGVGERTREGNDLYMEMKESGVINEKNITESKVALVYGQMNEPPGARMRVGLTALTMAEYFRDVNEQDVLLFIDNIFRFVQAGSEVSALLGRMPSAVGYQPTLSTEMGSLQERITSTKEGSITSIQAVYVPADDLTDPAPATTFAHLDATTVLSRGLAAKGIYPAVDPLDSTSMMLQPRIVGEEHYETAQKVKQTLQRYKELQDIIAILGLDELSEEDRLTVARARKIERFLSQPFFVAEVFTGSPGKYVGLAETIRGFNLILSGELDSLPEQAFYLVGNIDEATKKAMDLKT.

170 to 177 (GGAGVGKT) lines the ATP pocket.

It belongs to the ATPase alpha/beta chains family. In terms of assembly, F-type ATPases have 2 components, CF(1) - the catalytic core - and CF(0) - the membrane proton channel. CF(1) has five subunits: alpha(3), beta(3), gamma(1), delta(1), epsilon(1). CF(0) has four main subunits: a(1), b(1), b'(1) and c(9-12).

Its subcellular location is the plastid membrane. The catalysed reaction is ATP + H2O + 4 H(+)(in) = ADP + phosphate + 5 H(+)(out). Functionally, produces ATP from ADP in the presence of a proton gradient across the membrane. The catalytic sites are hosted primarily by the beta subunits. The polypeptide is ATP synthase subunit beta, plastid (Cuscuta exaltata (Tall dodder)).